The primary structure comprises 577 residues: MLFSKLFAPTLKEPPKDAVLKSHKHLAQAGYIYQVGSGIYNFLPLAKKVLDKIENITHKRMQEHGAQNILMSFVVLASLWEKSGRLDKYGKELLVFKDRKDNDFVLSPTLEENITEIAANFIKSYKQLPVHLYQIHTKFRDEIRPRFGLVRAREFIMKDGYSFHEDAESLDKEFLNTQSAYKEILSDLGLDFRIVEADSGAIGGSKSREFVVLTECGEDTIVVCKNCDYAANIEIAKRSKRPEPLNVPKAQLAKFPTPNTTSAQSVAEFFKTEPYFVLKALVRKVIHKDKETLACFFVRGDDNLEEVKALNALNLLGANALELREASKEDLNNAGLIAGFIGPYGLKKHVSYIIFDEDLKEGDCLIVGANEKDFHAVGVDLKGFENLVYADIVQVKESDHCPDCQGELKYHKSLEVGHIFKLGQGYAKSLKASFLDKNGKERFFEMGCYGIGISRLLSAILEQKSDDLGCVWTKNTAPFDVVIVVSNWKDEAQKKLAFEVYERLRQKGVDALLDDRDARFGAKMRDFELIGERLALIVGKQTLESKEFECIKRANLEKQTLKDTELEEKILEMLKSE.

The protein belongs to the class-II aminoacyl-tRNA synthetase family. ProS type 1 subfamily. Homodimer.

It localises to the cytoplasm. The catalysed reaction is tRNA(Pro) + L-proline + ATP = L-prolyl-tRNA(Pro) + AMP + diphosphate. Its function is as follows. Catalyzes the attachment of proline to tRNA(Pro) in a two-step reaction: proline is first activated by ATP to form Pro-AMP and then transferred to the acceptor end of tRNA(Pro). As ProRS can inadvertently accommodate and process non-cognate amino acids such as alanine and cysteine, to avoid such errors it has two additional distinct editing activities against alanine. One activity is designated as 'pretransfer' editing and involves the tRNA(Pro)-independent hydrolysis of activated Ala-AMP. The other activity is designated 'posttransfer' editing and involves deacylation of mischarged Ala-tRNA(Pro). The misacylated Cys-tRNA(Pro) is not edited by ProRS. This chain is Proline--tRNA ligase, found in Helicobacter pylori (strain Shi470).